The primary structure comprises 122 residues: UPF0102 protein RHE_CH00320 (122 aa).

Belongs to the UPF0102 family.

The protein is UPF0102 protein RHE_CH00320 of Rhizobium etli (strain ATCC 51251 / DSM 11541 / JCM 21823 / NBRC 15573 / CFN 42).